A 653-amino-acid polypeptide reads, in one-letter code: Amyloid beta A4 precursor protein-binding family B member 1-interacting protein (653 aa).

Positions 82 to 141 (NNKSTAPFPPADASNSYHFHPPPMPSIITEDLSLLPPPPEFDPHYPPPPPDPLTEPKTQE) are disordered. Pro residues predominate over residues 116-134 (LPPPPEFDPHYPPPPPDPL). The Ras-associating domain maps to 165 to 253 (KKRIVKVHMI…IHFLEKNEKY (89 aa)). The PH domain occupies 295 to 404 (VPELEAALYL…WVTGIRIAKY (110 aa)). Basic and acidic residues predominate over residues 462-481 (KHGEANKQEKKSSEVNKPET). The segment at 462 to 653 (KHGEANKQEK…ALQKKREPPT (192 aa)) is disordered. The segment covering 585 to 604 (PAPPPPPPPPAPAANVPPLP) has biased composition (pro residues). A compositionally biased stretch (basic residues) spans 605 to 614 (VKKHPPKPPK).

This sequence belongs to the MRL family.

It is found in the cell membrane. It localises to the cytoplasm. Its subcellular location is the cytoskeleton. Appears to function in the signal transduction from Ras activation to actin cytoskeletal remodeling. This chain is Amyloid beta A4 precursor protein-binding family B member 1-interacting protein (apbb1ip), found in Xenopus laevis (African clawed frog).